A 587-amino-acid polypeptide reads, in one-letter code: Protein cereblon (587 aa).

3 disordered regions span residues 1–56 (MDEE…PAEY), 78–113 (DVLQ…GLPN), and 157–195 (FSQE…IDIG). 2 stretches are compositionally biased toward polar residues: residues 22-31 (EDQSQSQGLQ) and 86-96 (SEGSHPSSDMS). The span at 159–168 (QERRRSRTSE) shows a compositional bias: basic and acidic residues. A compositionally biased stretch (acidic residues) spans 170 to 181 (TSQEEAAEEPDD). Residues 182 to 191 (PPPQQPPLPP) are compositionally biased toward pro residues. A Lon N-terminal domain is found at 227-453 (HMLIFLHHHI…LIKSTFKDET (227 aa)). The region spanning 452-561 (ETLFFCRYCN…LSGSSVRIGK (110 aa)) is the CULT domain. Residues cysteine 457, cysteine 460, cysteine 526, and cysteine 529 each coordinate Zn(2+).

This sequence belongs to the CRBN family. In terms of assembly, likely a component of a DCX (DDB1-CUL4-X-box) protein ligase complex. May interact with pic/DDB1. In terms of processing, ubiquitinated.

It localises to the nucleus. Its pathway is protein modification; protein ubiquitination. Functionally, substrate recognition component of a DCX (DDB1-CUL4-X-box) E3 protein ligase complex that mediates the ubiquitination and subsequent proteasomal degradation of target proteins. Has an essential role in mediating growth by negatively regulating insulin signaling. It also has a role in maintaining presynaptic function in the neuromuscular junction synapses of third-instar larvae. The chain is Protein cereblon from Drosophila simulans (Fruit fly).